Consider the following 269-residue polypeptide: Regulating synaptic membrane exocytosis protein 4 (269 aa).

The C2 domain maps to 115–233 (PMGGVEIGLQ…DLTTLAVGWY (119 aa)). 2 positions are modified to phosphoserine: Ser-254 and Ser-257.

As to quaternary structure, binds PPFIA3. Brain specific.

The protein resides in the synapse. Its function is as follows. Regulates synaptic membrane exocytosis. The polypeptide is Regulating synaptic membrane exocytosis protein 4 (Rims4) (Rattus norvegicus (Rat)).